The sequence spans 281 residues: Bis(5'-nucleosyl)-tetraphosphatase, symmetrical (281 aa).

It belongs to the Ap4A hydrolase family.

It catalyses the reaction P(1),P(4)-bis(5'-adenosyl) tetraphosphate + H2O = 2 ADP + 2 H(+). Hydrolyzes diadenosine 5',5'''-P1,P4-tetraphosphate to yield ADP. The chain is Bis(5'-nucleosyl)-tetraphosphatase, symmetrical from Acidovorax sp. (strain JS42).